Here is a 270-residue protein sequence, read N- to C-terminus: 2-aminoethanethiol dioxygenase (270 aa).

Residues 21–48 (FRGSGGGRGASDRDAASGPEAPMQPGFP) are disordered. Positions 112 and 114 each coordinate Fe cation. The interval 140–164 (GGQRPRALPPEQQFEPPLQPREREA) is disordered. H193 is a Fe cation binding site. Residues 220-223 (CHYY) constitute a cross-link (3'-(S-cysteinyl)-tyrosine (Cys-Tyr)).

Monomer. Fe cation is required as a cofactor.

It carries out the reaction cysteamine + O2 = hypotaurine + H(+). The catalysed reaction is N-terminal L-cysteinyl-[protein] + O2 = N-terminal S-hydroxy-S-oxy-L-cysteinyl-[protein] + H(+). Its function is as follows. Plays a vital role in regulating thiol metabolism and preserving oxygen homeostasis by oxidizing the sulfur of cysteamine and N-terminal cysteine-containing proteins to their corresponding sulfinic acids using O2 as a cosubstrate. Catalyzes the oxidation of cysteamine (2-aminoethanethiol) to hypotaurine. Catalyzes the oxidation of regulators of G-protein signaling 4 (RGS4) and 5 (RGS5) and interleukin-32 (IL32). This Homo sapiens (Human) protein is 2-aminoethanethiol dioxygenase (ADO).